The following is a 180-amino-acid chain: D(1A) dopamine receptor (180 aa).

Residues N1–I10 form a helical membrane-spanning segment. Residues R11–N21 lie on the Cytoplasmic side of the membrane. The chain crosses the membrane as a helical span at residues F22–A48. Residues G49–C57 are Extracellular-facing. A disulfide bridge links C57 with C147. A helical transmembrane segment spans residues N58–V80. The Cytoplasmic segment spans residues D81–K99. Residues A100–W124 form a helical membrane-spanning segment. The Extracellular portion of the chain corresponds to H125–R153. A glycan (N-linked (GlcNAc...) asparagine) is linked at N136. The helical transmembrane segment at T154–H179 threads the bilayer. Position 180 (R180) is a topological domain, cytoplasmic.

This sequence belongs to the G-protein coupled receptor 1 family. In terms of assembly, interacts with DNAJC14 via its C-terminus. Interacts with DRD2. Interacts with DORIP1.

Its subcellular location is the cell membrane. The protein localises to the endoplasmic reticulum membrane. The protein resides in the cell projection. It is found in the cilium membrane. Its function is as follows. Dopamine receptor whose activity is mediated by G proteins which activate adenylyl cyclase. The polypeptide is D(1A) dopamine receptor (DRD1) (Oryctolagus cuniculus (Rabbit)).